Here is a 225-residue protein sequence, read N- to C-terminus: Octanoyltransferase (225 aa).

Residues 42-219 (KNRQASMIFC…SICSALEYIN (178 aa)) enclose the BPL/LPL catalytic domain. Residues 79 to 86 (RGGKITWH), 149 to 151 (AIG), and 162 to 164 (GFA) contribute to the substrate site. The Acyl-thioester intermediate role is filled by cysteine 180.

The protein belongs to the LipB family.

Its subcellular location is the cytoplasm. It carries out the reaction octanoyl-[ACP] + L-lysyl-[protein] = N(6)-octanoyl-L-lysyl-[protein] + holo-[ACP] + H(+). Its pathway is protein modification; protein lipoylation via endogenous pathway; protein N(6)-(lipoyl)lysine from octanoyl-[acyl-carrier-protein]: step 1/2. In terms of biological role, catalyzes the transfer of endogenously produced octanoic acid from octanoyl-acyl-carrier-protein onto the lipoyl domains of lipoate-dependent enzymes. Lipoyl-ACP can also act as a substrate although octanoyl-ACP is likely to be the physiological substrate. This Tropheryma whipplei (strain TW08/27) (Whipple's bacillus) protein is Octanoyltransferase.